A 24-amino-acid chain; its full sequence is Potassium channel toxin alpha-KTx 6 OcyKTx5 (24 aa).

Cys3 and Cys24 form a disulfide bridge.

Belongs to the short scorpion toxin superfamily. Potassium channel inhibitor family. Alpha-KTx 06 subfamily. As to expression, expressed by the venom gland.

It localises to the secreted. Its function is as follows. Blocks voltage-gated potassium channels. The protein is Potassium channel toxin alpha-KTx 6 OcyKTx5 of Opisthacanthus cayaporum (South American scorpion).